The sequence spans 103 residues: Large ribosomal subunit protein bL21 (103 aa).

Belongs to the bacterial ribosomal protein bL21 family. In terms of assembly, part of the 50S ribosomal subunit. Contacts protein L20.

This protein binds to 23S rRNA in the presence of protein L20. This Sodalis glossinidius (strain morsitans) protein is Large ribosomal subunit protein bL21.